Here is a 268-residue protein sequence, read N- to C-terminus: 4-hydroxy-tetrahydrodipicolinate reductase (268 aa).

9–14 (GCSGRM) serves as a coordination point for NAD(+). Arginine 36 is an NADP(+) binding site. Residues 98–100 (GTT) and 122–125 (APNT) contribute to the NAD(+) site. Histidine 155 serves as the catalytic Proton donor/acceptor. Histidine 156 is a binding site for (S)-2,3,4,5-tetrahydrodipicolinate. Catalysis depends on lysine 159, which acts as the Proton donor. A (S)-2,3,4,5-tetrahydrodipicolinate-binding site is contributed by 165-166 (GT).

This sequence belongs to the DapB family.

The protein resides in the cytoplasm. The enzyme catalyses (S)-2,3,4,5-tetrahydrodipicolinate + NAD(+) + H2O = (2S,4S)-4-hydroxy-2,3,4,5-tetrahydrodipicolinate + NADH + H(+). It catalyses the reaction (S)-2,3,4,5-tetrahydrodipicolinate + NADP(+) + H2O = (2S,4S)-4-hydroxy-2,3,4,5-tetrahydrodipicolinate + NADPH + H(+). Its pathway is amino-acid biosynthesis; L-lysine biosynthesis via DAP pathway; (S)-tetrahydrodipicolinate from L-aspartate: step 4/4. Catalyzes the conversion of 4-hydroxy-tetrahydrodipicolinate (HTPA) to tetrahydrodipicolinate. In Colwellia psychrerythraea (strain 34H / ATCC BAA-681) (Vibrio psychroerythus), this protein is 4-hydroxy-tetrahydrodipicolinate reductase.